Consider the following 267-residue polypeptide: MSNILNKIVATKKIEVANRLKQVSLANQRAQAEANNQDVLLKPRGFIQAIEKKITAGKAAVITEIKKASPSRGILRELFVPTDIAQSYEKHGAACLSVLTDADYFQGCNDYLQQARAACSIPVLRKDFTIDPYQVYEARAIGADAILLIVAYLELNQMKDLEACANELGLDVLVEVHNASELEQALELKTPLLGINNRNLKTFEVTLQNTLSLLSMVPNDKTLVTESGILSHTDVQLMRDHHVNAFLVGEAFMRAADPGAALSELFS.

Belongs to the TrpC family.

The enzyme catalyses 1-(2-carboxyphenylamino)-1-deoxy-D-ribulose 5-phosphate + H(+) = (1S,2R)-1-C-(indol-3-yl)glycerol 3-phosphate + CO2 + H2O. It participates in amino-acid biosynthesis; L-tryptophan biosynthesis; L-tryptophan from chorismate: step 4/5. This chain is Indole-3-glycerol phosphate synthase, found in Polynucleobacter necessarius subsp. necessarius (strain STIR1).